A 508-amino-acid chain; its full sequence is NAD(P)H-quinone oxidoreductase subunit 2 B, chloroplastic (508 aa).

Helical transmembrane passes span 24–44, 59–79, 99–119, 124–144, 149–169, 184–204, 227–247, 295–315, 323–343, 354–374, 395–415, 418–438, and 482–502; these read LLLF…GLIL, WLYF…LFRW, IFQF…VEYI, MAIT…MFLC, FITI…LSGY, LLMG…LYGL, PGIS…LSPA, WHLL…LIAI, MLAY…IVGD, YMLF…LFGL, ALSL…AGFF, LYLF…IGLL, and MIVC…IIAI.

It belongs to the complex I subunit 2 family. NDH is composed of at least 16 different subunits, 5 of which are encoded in the nucleus.

The protein resides in the plastid. It is found in the chloroplast thylakoid membrane. The catalysed reaction is a plastoquinone + NADH + (n+1) H(+)(in) = a plastoquinol + NAD(+) + n H(+)(out). The enzyme catalyses a plastoquinone + NADPH + (n+1) H(+)(in) = a plastoquinol + NADP(+) + n H(+)(out). Its function is as follows. NDH shuttles electrons from NAD(P)H:plastoquinone, via FMN and iron-sulfur (Fe-S) centers, to quinones in the photosynthetic chain and possibly in a chloroplast respiratory chain. The immediate electron acceptor for the enzyme in this species is believed to be plastoquinone. Couples the redox reaction to proton translocation, and thus conserves the redox energy in a proton gradient. The sequence is that of NAD(P)H-quinone oxidoreductase subunit 2 B, chloroplastic from Ipomoea purpurea (Common morning glory).